The chain runs to 81 residues: Elsinochrome C biosynthesis cluster protein SNOG_08613 (81 aa).

Functionally, part of the gene cluster that mediates the biosynthesis of elsinochrome C, a perelyenequinone phytotoxin structurally similar to cercosporin. The first step of elsinochrome C biosynthesis is performed by the polyketide synthase elcA which catalyzes the formation of nor-toralactone. The starter unit acyltransferase (SAT) domain of elcA initiates polyketide extension by the selective utilization of acetyl-CoA, which is elongated to the heptaketide in the beta-ketoacyl synthase (KS) domain by successive condensations with six malonyl units introduced by the malonyl acyltransferase (MAT) domain. The product template (PT) domain catalyzes C4-C9 and C2-C11 aldol cyclizations and dehydrations to a trihydroxynaphthalene, which is thought to be delivered to the thioesterase (TE) domain for product release. The bifunctional enzyme elcB then methylates nor-toralactone to toralactone before conducting an unusual oxidative aromatic ring opening. The next step in perylenequinone biosynthesis is an O-methylation at the nascent OH-6 of the elcB product performed by the O-methyltransferase elcD. The oxidative coupling of the two monomeric naphthol units in perylenequinone biosynthesis is catalyzed by the FAD-dependent monooxygenase elcE and the multicopper oxidase elcG. ElcG might catalyze the first intermolecular coupling in a regio- and stereo-selective manner via a phenol radical coupling mechanism and the elcE could forge the second C-C bond intramolecularly via a hydride transfer mechanism. The fasciclin domain-containing protein elcF might also play a role duting this step. The last piece of the puzzle in the biosynthesis of elsinochrome C is the additional annulation by enolate coupling to afford the dihydrobenzo(ghi)perylenequinone system, catalyzed by the FAD-dependent monooxygenase elcH. This is Elsinochrome C biosynthesis cluster protein SNOG_08613 from Phaeosphaeria nodorum (strain SN15 / ATCC MYA-4574 / FGSC 10173) (Glume blotch fungus).